The sequence spans 437 residues: Tol-Pal system protein TolB (437 aa).

Residues 1–30 (MLPTPSRSHKLSGYAAVLFFLWLVCSPAQA) form the signal peptide. Residues 410–423 (SDGRTRQQLSTQTG) are compositionally biased toward polar residues. A disordered region spans residues 410 to 437 (SDGRTRQQLSTQTGDIREPAWGPLRRLQ).

It belongs to the TolB family. In terms of assembly, the Tol-Pal system is composed of five core proteins: the inner membrane proteins TolA, TolQ and TolR, the periplasmic protein TolB and the outer membrane protein Pal. They form a network linking the inner and outer membranes and the peptidoglycan layer.

The protein resides in the periplasm. In terms of biological role, part of the Tol-Pal system, which plays a role in outer membrane invagination during cell division and is important for maintaining outer membrane integrity. The polypeptide is Tol-Pal system protein TolB (Nitrosospira multiformis (strain ATCC 25196 / NCIMB 11849 / C 71)).